We begin with the raw amino-acid sequence, 301 residues long: Bifunctional protein FolD (301 aa).

NADP(+) is bound by residues 164 to 166, Ser191, and Ile232; that span reads GRS.

This sequence belongs to the tetrahydrofolate dehydrogenase/cyclohydrolase family. As to quaternary structure, homodimer.

It catalyses the reaction (6R)-5,10-methylene-5,6,7,8-tetrahydrofolate + NADP(+) = (6R)-5,10-methenyltetrahydrofolate + NADPH. The catalysed reaction is (6R)-5,10-methenyltetrahydrofolate + H2O = (6R)-10-formyltetrahydrofolate + H(+). It participates in one-carbon metabolism; tetrahydrofolate interconversion. Catalyzes the oxidation of 5,10-methylenetetrahydrofolate to 5,10-methenyltetrahydrofolate and then the hydrolysis of 5,10-methenyltetrahydrofolate to 10-formyltetrahydrofolate. This Borreliella afzelii (strain PKo) (Borrelia afzelii) protein is Bifunctional protein FolD.